We begin with the raw amino-acid sequence, 160 residues long: SsrA-binding protein (160 aa).

It belongs to the SmpB family.

The protein localises to the cytoplasm. Required for rescue of stalled ribosomes mediated by trans-translation. Binds to transfer-messenger RNA (tmRNA), required for stable association of tmRNA with ribosomes. tmRNA and SmpB together mimic tRNA shape, replacing the anticodon stem-loop with SmpB. tmRNA is encoded by the ssrA gene; the 2 termini fold to resemble tRNA(Ala) and it encodes a 'tag peptide', a short internal open reading frame. During trans-translation Ala-aminoacylated tmRNA acts like a tRNA, entering the A-site of stalled ribosomes, displacing the stalled mRNA. The ribosome then switches to translate the ORF on the tmRNA; the nascent peptide is terminated with the 'tag peptide' encoded by the tmRNA and targeted for degradation. The ribosome is freed to recommence translation, which seems to be the essential function of trans-translation. The protein is SsrA-binding protein of Mycobacterium leprae (strain Br4923).